Consider the following 573-residue polypeptide: Proline--tRNA ligase (573 aa).

It belongs to the class-II aminoacyl-tRNA synthetase family. ProS type 1 subfamily. Homodimer.

It localises to the cytoplasm. It catalyses the reaction tRNA(Pro) + L-proline + ATP = L-prolyl-tRNA(Pro) + AMP + diphosphate. Functionally, catalyzes the attachment of proline to tRNA(Pro) in a two-step reaction: proline is first activated by ATP to form Pro-AMP and then transferred to the acceptor end of tRNA(Pro). As ProRS can inadvertently accommodate and process non-cognate amino acids such as alanine and cysteine, to avoid such errors it has two additional distinct editing activities against alanine. One activity is designated as 'pretransfer' editing and involves the tRNA(Pro)-independent hydrolysis of activated Ala-AMP. The other activity is designated 'posttransfer' editing and involves deacylation of mischarged Ala-tRNA(Pro). The misacylated Cys-tRNA(Pro) is not edited by ProRS. The protein is Proline--tRNA ligase of Moorella thermoacetica (strain ATCC 39073 / JCM 9320).